A 658-amino-acid chain; its full sequence is Palmitoyltransferase ZDHHC5-B (658 aa).

The Cytoplasmic segment spans residues 1-24 (MPVGLSVGGALGDPSPSRPFRPSR). The chain crosses the membrane as a helical span at residues 25–45 (YVPVSAATAFLVGATTLFLCF). The Extracellular segment spans residues 46–56 (TCPWLSEKFSS). A helical transmembrane segment spans residues 57 to 77 (FIPLYNVVVFLFTLANFCMAT). Residues 78–159 (FMDPGVFPRA…NCIGRRNYRY (82 aa)) lie on the Cytoplasmic side of the membrane. In terms of domain architecture, DHHC spans 115 to 165 (KWCSTCRFYRPPRCSHCSVCDNCVEEFDHHCPWVNNCIGRRNYRYFFLFLL). Cys-145 functions as the S-palmitoyl cysteine intermediate in the catalytic mechanism. The helical transmembrane segment at 160 to 180 (FFLFLLSLTVHIMDVFGFSLL) threads the bilayer. The Extracellular portion of the chain corresponds to 181–202 (YILHHTKQLDLVQSGVTMAVMC). The chain crosses the membrane as a helical span at residues 203–223 (VAGLFFVPVAGLTGFHVVLVA). Residues 224-658 (RGRTTNEQVT…VGGTTYEISV (435 aa)) lie on the Cytoplasmic side of the membrane. Disordered regions lie at residues 306–419 (EIME…RSGS), 490–522 (ESLL…LSTA), and 540–658 (QREG…EISV). The segment covering 360 to 398 (PGKNHTASTHSSKMSRGNSMTESPSVPVTTGQPSYRSDP) has biased composition (polar residues). Residues 407-419 (GCRGGAEGGRSGS) show a composition bias toward gly residues. Residues 565-575 (SSPPSRAPPLS) are compositionally biased toward pro residues. A compositionally biased stretch (polar residues) spans 619–633 (SMPNSTIKQNVANHN). A compositionally biased stretch (basic residues) spans 634–644 (THSHKPARGVK).

The protein belongs to the DHHC palmitoyltransferase family. ERF2/ZDHHC9 subfamily.

The protein resides in the cell membrane. The catalysed reaction is L-cysteinyl-[protein] + hexadecanoyl-CoA = S-hexadecanoyl-L-cysteinyl-[protein] + CoA. In terms of biological role, palmitoyltransferase that catalyzes the addition of palmitate onto various protein substrates and is involved in a variety of cellular processes. In Danio rerio (Zebrafish), this protein is Palmitoyltransferase ZDHHC5-B.